The chain runs to 486 residues: UDP-N-acetylmuramate--L-alanine ligase (486 aa).

Residue 126–132 (GTHGKTS) coordinates ATP.

The protein belongs to the MurCDEF family.

The protein localises to the cytoplasm. The enzyme catalyses UDP-N-acetyl-alpha-D-muramate + L-alanine + ATP = UDP-N-acetyl-alpha-D-muramoyl-L-alanine + ADP + phosphate + H(+). The protein operates within cell wall biogenesis; peptidoglycan biosynthesis. Functionally, cell wall formation. The sequence is that of UDP-N-acetylmuramate--L-alanine ligase from Buchnera aphidicola subsp. Baizongia pistaciae (strain Bp).